The chain runs to 505 residues: Aspartyl/glutamyl-tRNA(Asn/Gln) amidotransferase subunit B (505 aa).

This sequence belongs to the GatB/GatE family. GatB subfamily. Heterotrimer of A, B and C subunits.

It carries out the reaction L-glutamyl-tRNA(Gln) + L-glutamine + ATP + H2O = L-glutaminyl-tRNA(Gln) + L-glutamate + ADP + phosphate + H(+). It catalyses the reaction L-aspartyl-tRNA(Asn) + L-glutamine + ATP + H2O = L-asparaginyl-tRNA(Asn) + L-glutamate + ADP + phosphate + 2 H(+). Allows the formation of correctly charged Asn-tRNA(Asn) or Gln-tRNA(Gln) through the transamidation of misacylated Asp-tRNA(Asn) or Glu-tRNA(Gln) in organisms which lack either or both of asparaginyl-tRNA or glutaminyl-tRNA synthetases. The reaction takes place in the presence of glutamine and ATP through an activated phospho-Asp-tRNA(Asn) or phospho-Glu-tRNA(Gln). The polypeptide is Aspartyl/glutamyl-tRNA(Asn/Gln) amidotransferase subunit B (Dinoroseobacter shibae (strain DSM 16493 / NCIMB 14021 / DFL 12)).